Consider the following 297-residue polypeptide: Palmitoyl-protein thioesterase ABHD10, mitochondrial (297 aa).

The N-terminal 43 residues, 1–43 (MAAWAPCRRWGWAAVSFGRHPGLSASLARKPPRAWWLSACRQK), are a transit peptide targeting the mitochondrion. The 128-residue stretch at 69–196 (IIFIPGYLSN…EIEMKGEWTL (128 aa)) folds into the AB hydrolase-1 domain. Residues Ser-143, Asp-240, and His-270 each act as charge relay system in the active site.

The protein belongs to the AB hydrolase superfamily.

It localises to the mitochondrion. The catalysed reaction is S-hexadecanoyl-L-cysteinyl-[protein] + H2O = L-cysteinyl-[protein] + hexadecanoate + H(+). It catalyses the reaction mycophenolic acid O-acyl-beta-D-glucuronide + H2O = mycophenolate + D-glucuronate + H(+). Its activity is regulated as follows. Inhibited by palmostatin-B. Functionally, acts as an acyl-protein thioesterase that hydrolyzes fatty acids from acylated residues in proteins. Regulates the mitochondrial S-depalmitoylation of the nucleophilic active site residue of peroxiredoxin-5/PRDX5, a key antioxidant protein, therefore modulating mitochondrial antioxidant ability. Also catalyzes the deglucuronidation of mycophenolic acid acyl-glucuronide, an active metabolite of the immunosuppressant drug mycophenolate. This chain is Palmitoyl-protein thioesterase ABHD10, mitochondrial, found in Mus musculus (Mouse).